The primary structure comprises 337 residues: MVQGLKLGLKASAEQFGPRDLVELGVMAEEHGLDSVTVSDHFQPWRHNGGHAPFSIAWMTAVGERTQRLQLGTSVMTPTFRYNPAVVAQAFATMGCLYPGRVMLGVGTGEALNEIATGFKGEWPEFKERFARLRESVQLMRDLWTGDRVDFEGEYYSTKGASIYDVPEGGIPVYIAAGGPVVARYAGRAGEGFICTSGKGMDLYTEKLIPAVKEGAEKAARNFADIDRMIEIKISYDTDPAAALENTRFWAPLSLTAEQKHSIDDPIEMEAAADALPIEQVAKRWIVSSDPDEAVEMIKPYLDAGLNHLVFHAPGHDQKRFLDLFERDLAPRLRALA.

Residue Asp40 participates in coenzyme F420-(gamma-Glu)n binding. His41 (proton donor) is an active-site residue. Coenzyme F420-(gamma-Glu)n-binding positions include Thr77 and 108–109; that span reads TG. Glu110 acts as the Proton acceptor in catalysis. Coenzyme F420-(gamma-Glu)n-binding positions include Asn113, 178–179, and 181–182; these read GG and VV. Residues Thr196, Lys199, Lys260, and Arg284 each coordinate substrate.

Belongs to the F420-dependent glucose-6-phosphate dehydrogenase family. As to quaternary structure, homodimer.

The enzyme catalyses oxidized coenzyme F420-(gamma-L-Glu)(n) + D-glucose 6-phosphate + H(+) = 6-phospho-D-glucono-1,5-lactone + reduced coenzyme F420-(gamma-L-Glu)(n). In terms of biological role, catalyzes the coenzyme F420-dependent oxidation of glucose 6-phosphate (G6P) to 6-phosphogluconolactone. In Rhodococcus hoagii (strain 103S) (Rhodococcus equi), this protein is F420-dependent glucose-6-phosphate dehydrogenase.